The sequence spans 344 residues: Methionine import ATP-binding protein MetN (344 aa).

The ABC transporter domain occupies 2 to 241 (IEIKSVNKVF…PKTELAHQFI (240 aa)). 38 to 45 (GSSGAGKS) is an ATP binding site.

Belongs to the ABC transporter superfamily. Methionine importer (TC 3.A.1.24) family. In terms of assembly, the complex is composed of two ATP-binding proteins (MetN), two transmembrane proteins (MetI) and a solute-binding protein (MetQ).

Its subcellular location is the cell inner membrane. The enzyme catalyses L-methionine(out) + ATP + H2O = L-methionine(in) + ADP + phosphate + H(+). The catalysed reaction is D-methionine(out) + ATP + H2O = D-methionine(in) + ADP + phosphate + H(+). In terms of biological role, part of the ABC transporter complex MetNIQ involved in methionine import. Responsible for energy coupling to the transport system. This Vibrio cholerae serotype O1 (strain ATCC 39315 / El Tor Inaba N16961) protein is Methionine import ATP-binding protein MetN.